The chain runs to 1134 residues: Spermatogenesis-associated protein 31C2 (1134 aa).

Residues 23–43 form a helical membrane-spanning segment; the sequence is PWVLDIFLTLVFALGFFFLLL. 7 disordered regions span residues 54–87, 115–243, 477–504, 524–561, 727–807, 928–1007, and 1111–1134; these read PPSP…NHSL, LEKG…LLTP, PGTS…EAQT, TPQN…DSGS, MPER…PTVP, NMGH…PSIS, and AASS…IRDQ. A compositionally biased stretch (basic residues) spans 59 to 87; that stretch reads PKKRKRHLVSQRPAGRRGRPRGRMKNHSL. The segment covering 132-148 has biased composition (basic and acidic residues); the sequence is VGKRTPDGASRSSHEPT. Residues 185-201 are compositionally biased toward low complexity; the sequence is SSLSASQPPEPSLLLEH. Residues 204-235 show a composition bias toward pro residues; the sequence is PEPPALFPHPPRTPDPLACSPPPPKGFTPPPL. The segment covering 489-504 has biased composition (polar residues); sequence WQSSTSTGESSKEAQT. Composition is skewed to polar residues over residues 773 to 794 and 937 to 948; these read LTYS…SSRA and PNCQGSCKSQSP. The segment covering 954 to 970 has biased composition (basic and acidic residues); sequence HKRENSRKPNLEKHEEM. Over residues 1111 to 1124 the composition is skewed to polar residues; that stretch reads AASSQQATLKNQSR. The span at 1125 to 1134 shows a compositional bias: basic and acidic residues; that stretch reads PNRDRQIRDQ.

The protein belongs to the SPATA31 family.

The protein resides in the membrane. In terms of biological role, may play a role in spermatogenesis. In Homo sapiens (Human), this protein is Spermatogenesis-associated protein 31C2 (SPATA31C2).